Consider the following 176-residue polypeptide: MATATDRAPHQVQVHTPTTQRVDVQRRGYDVSGGGVKTFLPDRGPSTSQIIAVLVGVPTGGTLLLLSGLSLLGTIIGLAIATPVFTFFSPVIVPAVVTIGLAVIGILTAGACGLTGLMSLSWMINFIRQVHGTTVPDQLDSAKRRMADMADYVGQKTKDAGQEIQTKAQDVKRSSS.

Position 2 is an N-acetylalanine; alternate (Ala2). 2 helical membrane-spanning segments follow: residues 61–81 (GTLL…LAIA) and 87–107 (FFSP…IGIL). Positions 156 to 176 (KTKDAGQEIQTKAQDVKRSSS) are disordered.

Belongs to the oleosin family. Homodimer. Forms oligomers. Expressed in seeds (at protein level). Not expressed in leaves.

The protein localises to the lipid droplet. It localises to the membrane. Its function is as follows. May have a structural role to stabilize the lipid body during desiccation of the seed by preventing coalescence of the oil. Probably interacts with both lipid and phospholipid moieties of lipid bodies. May also provide recognition signals for specific lipase anchorage in lipolysis during seedling growth. The protein is Oleosin Ara h 14.0102 of Arachis hypogaea (Peanut).